The following is a 622-amino-acid chain: Cell pattern formation-associated protein stuA (622 aa).

2 disordered regions span residues 1 to 24 (MASM…QTYA) and 62 to 81 (YPNS…SISS). The 107-residue stretch at 129–235 (RVTATLWEDE…QHISNLLYHP (107 aa)) folds into the HTH APSES-type domain. Residues 163–184 (GTKLLNVAGMTRGRRDGILKSE) constitute a DNA-binding region (H-T-H motif). 2 disordered regions span residues 239–517 (NQRN…TPPR) and 549–622 (SNSG…SARR). Polar residues-rich tracts occupy residues 274–283 (LQTPVPSHMS), 302–345 (ASAS…ARSM), and 355–370 (GNNL…QSGY). Over residues 384-395 (PQYAPQQPLPQQ) the composition is skewed to low complexity. Polar residues-rich tracts occupy residues 404–421 (MPTS…QRGS), 455–470 (SGYN…TNPS), 480–506 (QLTP…NTAP), and 549–563 (SNSG…SMGS). Residues 565-590 (KRMRDDDDDRIVPPDSRGEFDTKRRK) form a nuclear localization domain region. A compositionally biased stretch (basic and acidic residues) spans 566-586 (RMRDDDDDRIVPPDSRGEFDT).

Belongs to the EFG1/PHD1/stuA family.

It localises to the nucleus. Transcription factor that regulates asexual reproduction. Binds the StuA-response elements (StRE) with the consensus sequence 5'-(A/T)CGCG(T/A)N(A/C)-3' at the promoters of target genes. Required from the very earliest events of asexual reproduction until completion of conidiophore development, but is not specifically required for differentiation of conidia. Represses transcription of the abaA developmental regulatory gene and of the developmentally regulated awh11 gene. Controls the expression of the catalase-peroxidase gene cpeA. Plays an important role in cell wall biogenesis during the development by controlling the transcription level of fksA. This Emericella nidulans (strain FGSC A4 / ATCC 38163 / CBS 112.46 / NRRL 194 / M139) (Aspergillus nidulans) protein is Cell pattern formation-associated protein stuA.